The primary structure comprises 513 residues: Putative thymidine phosphorylase 2 (513 aa).

Belongs to the thymidine/pyrimidine-nucleoside phosphorylase family. Type 2 subfamily.

The enzyme catalyses thymidine + phosphate = 2-deoxy-alpha-D-ribose 1-phosphate + thymine. The sequence is that of Putative thymidine phosphorylase 2 from Acidovorax sp. (strain JS42).